The following is a 361-amino-acid chain: Collagenase (361 aa).

It belongs to the peptidase U32 family. In terms of assembly, homodimer. Requires a metal cation as cofactor.

Activity somewhat enhanced by calcium ions, inhibited by zinc and Fe(3+) ions and by p-chloromercuribenzoic acid and EDTA. Activity is enhanced by salivary peptide cystatin and reduced by salivary peptide histatin. Has collagenase activity. Active on soluble collagen, reconstituted type I collagen, heat denatured type I collagen and azocoll, but not gelatin or the synthetic bacterial collagenase substrate PZ-PLGPA. May play a role in virulence. The sequence is that of Collagenase from Porphyromonas gingivalis (Bacteroides gingivalis).